The primary structure comprises 130 residues: Mitochondrial pyruvate carrier 1 (130 aa).

The next 2 membrane-spanning stretches (helical) occupy residues 23–45 and 55–77; these read LKYI…IAAI and ISGP…ALSV.

The protein belongs to the mitochondrial pyruvate carrier (MPC) (TC 2.A.105) family. As to quaternary structure, the functional 150 kDa pyruvate import complex is a heteromer of MPC1 and either MPC2 or MPC3.

It is found in the mitochondrion. The protein resides in the mitochondrion inner membrane. Functionally, mediates the uptake of pyruvate into mitochondria. This is Mitochondrial pyruvate carrier 1 from Saccharomyces cerevisiae (strain ATCC 204508 / S288c) (Baker's yeast).